The primary structure comprises 344 residues: Ribosomal RNA large subunit methyltransferase Cfr (344 aa).

The active-site Proton acceptor is the Glu90. The 234-residue stretch at 97-330 (KQGWESFCIS…ATVRTQFGSE (234 aa)) folds into the Radical SAM core domain. A disulfide bridge links Cys104 with Cys335. 3 residues coordinate [4Fe-4S] cluster: Cys111, Cys115, and Cys118. S-adenosyl-L-methionine contacts are provided by residues 157 to 158 (GE), Ser188, 211 to 213 (SLH), and Asn292. Cys335 functions as the S-methylcysteine intermediate in the catalytic mechanism.

This sequence belongs to the radical SAM superfamily. RlmN family. Cfr subfamily. [4Fe-4S] cluster is required as a cofactor.

The protein localises to the cytoplasm. The enzyme catalyses adenosine(2503) in 23S rRNA + 2 reduced [2Fe-2S]-[ferredoxin] + 2 S-adenosyl-L-methionine = 8-methyladenosine(2503) in 23S rRNA + 5'-deoxyadenosine + L-methionine + 2 oxidized [2Fe-2S]-[ferredoxin] + S-adenosyl-L-homocysteine. In terms of biological role, specifically methylates position 8 of adenine 2503 in 23S rRNA. Confers resistance to some classes of antibiotics. The sequence is that of Ribosomal RNA large subunit methyltransferase Cfr from Clostridium botulinum (strain Okra / Type B1).